The sequence spans 388 residues: Succinate--CoA ligase [ADP-forming] subunit beta (388 aa).

Residues 9 to 244 form the ATP-grasp domain; sequence KQLFAEYGLP…PSQDDAREAH (236 aa). ATP-binding positions include lysine 46, 53–55, glutamate 99, threonine 102, and glutamate 107; that span reads GRG. Mg(2+) is bound by residues asparagine 199 and aspartate 213. Substrate contacts are provided by residues asparagine 264 and 321–323; that span reads GIV.

The protein belongs to the succinate/malate CoA ligase beta subunit family. Heterotetramer of two alpha and two beta subunits. Requires Mg(2+) as cofactor.

The enzyme catalyses succinate + ATP + CoA = succinyl-CoA + ADP + phosphate. The catalysed reaction is GTP + succinate + CoA = succinyl-CoA + GDP + phosphate. It participates in carbohydrate metabolism; tricarboxylic acid cycle; succinate from succinyl-CoA (ligase route): step 1/1. Functionally, succinyl-CoA synthetase functions in the citric acid cycle (TCA), coupling the hydrolysis of succinyl-CoA to the synthesis of either ATP or GTP and thus represents the only step of substrate-level phosphorylation in the TCA. The beta subunit provides nucleotide specificity of the enzyme and binds the substrate succinate, while the binding sites for coenzyme A and phosphate are found in the alpha subunit. In Pseudomonas entomophila (strain L48), this protein is Succinate--CoA ligase [ADP-forming] subunit beta.